We begin with the raw amino-acid sequence, 358 residues long: Phosphoribosyl pyrophosphate synthase-associated protein 2 (358 aa).

It belongs to the ribose-phosphate pyrophosphokinase family.

In terms of biological role, seems to play a negative regulatory role in 5-phosphoribose 1-diphosphate synthesis. This chain is Phosphoribosyl pyrophosphate synthase-associated protein 2 (prpsap2), found in Xenopus tropicalis (Western clawed frog).